The sequence spans 1825 residues: Proteasome activator complex subunit 4B (1825 aa).

6 HEAT repeats span residues 458–502 (PEGP…LVDC), 981–1020 (NFCCRDITPRVLEFLEPTRTDVTQQQFKGALYCLLGNHCG), 1162–1200 (YPLPAPAVFFFVQSLNHDALVVRKMAIAAVAGILKQLKR), 1336–1374 (DAFLPVLKPHMERLANDSHESTQRCVAEIIAGLIRGSKH), 1618–1656 (PEQIPMVLAVLHEIAGSSSWHARYSVLTYLQTMVFYNLF), and 1662–1700 (EQCVQGVRALVIRLLEDEQLEVREMAATTLSGFLQCNFL). The tract at residues 1632 to 1720 (AGSSSWHARY…EALCKTRLPK (89 aa)) is bromodomain-like (BRDL).

This sequence belongs to the BLM10 family. Homodimer. Interacts with the 20S and 26S proteasomes.

Its subcellular location is the cytoplasm. It is found in the cytosol. It localises to the nucleus. The protein localises to the nucleus speckle. Its function is as follows. Associated component of the proteasome that specifically recognizes acetylated histones and promotes ATP- and ubiquitin-independent degradation of core histones during DNA damage response. Recognizes and binds acetylated histones via its bromodomain-like (BRDL) region and activates the proteasome by opening the gated channel for substrate entry. Binds to the core proteasome via its C-terminus, which occupies the same binding sites as the proteasomal ATPases, opening the closed structure of the proteasome via an active gating mechanism. involved in DNA damage response in somatic cells: binds to acetylated histones and promotes degradation of histones. This Danio rerio (Zebrafish) protein is Proteasome activator complex subunit 4B (psme4b).